A 2073-amino-acid chain; its full sequence is Fatty acid synthase subunit beta (2073 aa).

The interval 1 to 459 (MVEAEQVHQS…VYSTDDAGDL (459 aa)) is acetyltransferase. The active-site For acetyltransferase activity is the Ser-270. Residues 470-858 (ALAVMITEKV…TRGIMFWKEL (389 aa)) are enoyl reductase. Position 1122 is a phosphoserine (Ser-1122). The segment at 1155–1644 (GPEYTWFRAI…LPNTELITKL (490 aa)) is dehydratase. His-1361 acts as the For dehydratase activity in catalysis. A MaoC-like domain is found at 1558–1667 (PVFVTPPTNS…VEVLNQETSE (110 aa)). Positions 1645 to 2073 (SHTGMINGRK…LQNWDEYESS (429 aa)) are malonyl/palmitoyl transferase. The For malonyltransferase activity role is filled by Ser-1828. Position 2073 is a phosphoserine (Ser-2073).

Belongs to the fungal fatty acid synthetase subunit beta family. [Alpha(6)beta(6)] hexamers of two multifunctional subunits (alpha and beta).

It carries out the reaction acetyl-CoA + n malonyl-CoA + 2n NADPH + 4n H(+) = a long-chain-acyl-CoA + n CoA + n CO2 + 2n NADP(+).. The enzyme catalyses holo-[ACP] + acetyl-CoA = acetyl-[ACP] + CoA. The catalysed reaction is holo-[ACP] + malonyl-CoA = malonyl-[ACP] + CoA. It catalyses the reaction a (3R)-hydroxyacyl-[ACP] = a (2E)-enoyl-[ACP] + H2O. It carries out the reaction a 2,3-saturated acyl-[ACP] + NAD(+) = a (2E)-enoyl-[ACP] + NADH + H(+). The enzyme catalyses (9Z)-octadecenoyl-[ACP] + H2O = (9Z)-octadecenoate + holo-[ACP] + H(+). Its function is as follows. Fatty acid synthetase catalyzes the formation of long-chain fatty acids from acetyl-CoA, malonyl-CoA and NADPH. The beta subunit contains domains for: [acyl-carrier-protein] acetyltransferase and malonyltransferase, S-acyl fatty acid synthase thioesterase, enoyl-[acyl-carrier-protein] reductase, and 3-hydroxypalmitoyl-[acyl-carrier-protein] dehydratase. The protein is Fatty acid synthase subunit beta (fas1) of Schizosaccharomyces pombe (strain 972 / ATCC 24843) (Fission yeast).